Here is a 545-residue protein sequence, read N- to C-terminus: Squalene monooxygenase SE2 (545 aa).

A helical membrane pass occupies residues 12–32 (EYFLMFAATLLFGFVLYLFTL). FAD-binding positions include 86 to 87 (VA), 106 to 107 (ER), Arg-114, Arg-185, Val-201, Asp-364, and Met-377. 2 consecutive transmembrane segments (helical) span residues 475–495 (LFFH…IPFP) and 500–520 (MWLG…IIKS).

Belongs to the squalene monooxygenase family. Requires FAD as cofactor. In terms of tissue distribution, weak expression in petioles and flower buds and barely detectable in roots and leaves. In petioles, preferentially observed in vascular bundle tissue (phloem cells and parenchymatous cells near xylem) and resin ducts.

It is found in the membrane. It carries out the reaction squalene + reduced [NADPH--hemoprotein reductase] + O2 = (S)-2,3-epoxysqualene + oxidized [NADPH--hemoprotein reductase] + H2O + H(+). The protein operates within terpene metabolism; lanosterol biosynthesis; lanosterol from farnesyl diphosphate: step 2/3. Its function is as follows. Component of the triterpene saponins (e.g. ginsenosides or panaxosides) and phytosterols biosynthetic pathways. Catalyzes the first oxygenation step in sterol biosynthesis and is suggested to be one of the rate-limiting enzymes in this pathway. The polypeptide is Squalene monooxygenase SE2 (Panax ginseng (Korean ginseng)).